Here is a 319-residue protein sequence, read N- to C-terminus: Ubiquinone biosynthesis protein COQ4, mitochondrial (319 aa).

A mitochondrion-targeting transit peptide spans 1–28 (MISRSIFSKSVSLQRSQNRSFLLTAASA). Residues histidine 205, aspartate 206, histidine 209, and glutamate 221 each contribute to the Zn(2+) site.

This sequence belongs to the COQ4 family. In terms of assembly, component of a multi-subunit COQ enzyme complex, composed of at least COQ3, COQ4, COQ5, COQ6, COQ7 and COQ9. Zn(2+) serves as cofactor.

It is found in the mitochondrion inner membrane. The enzyme catalyses a 4-hydroxy-3-methoxy-5-(all-trans-polyprenyl)benzoate + H(+) = a 2-methoxy-6-(all-trans-polyprenyl)phenol + CO2. The protein operates within cofactor biosynthesis; ubiquinone biosynthesis. Its function is as follows. Lyase that catalyzes the C1-decarboxylation of 4-hydroxy-3-methoxy-5-(all-trans-polyprenyl)benzoic acid into 2-methoxy-6-(all-trans-polyprenyl)phenol during ubiquinone biosynthesis. This chain is Ubiquinone biosynthesis protein COQ4, mitochondrial, found in Clavispora lusitaniae (strain ATCC 42720) (Yeast).